The primary structure comprises 212 residues: MNQFFITSINIIKKQEQMEFLIGFFTEYGYWAVLFVLIICGFGVPIPEDITLVSGGVIAGLYPENVNSHLMLLVSMIGVLAGDSCMYWLGRIYGTKILRFRPIRRIVTLQRLRMVREKFSQYGNRVLFVARFLPGLRAPIYMVSGITRRVSYVRFVLIDFCAAIISVPIWIYLGELGAKNLDWLHTQIQKGQIVIYIFIGYLYYSFLEMEKI.

A run of 4 helical transmembrane segments spans residues 20–40, 70–90, 155–175, and 192–212; these read FLIGFFTEYGYWAVLFVLIIC, LMLLVSMIGVLAGDSCMYWLG, FVLIDFCAAIISVPIWIYLGE, and QIVIYIFIGYLYYSFLEMEKI.

The protein belongs to the DedA family.

Its subcellular location is the cell membrane. This is an uncharacterized protein from Haemophilus influenzae (strain ATCC 51907 / DSM 11121 / KW20 / Rd).